The following is a 479-amino-acid chain: Protein C-ets-2 (479 aa).

Positions D88–S173 constitute a PNT domain. Positions I373 to V453 form a DNA-binding region, ETS.

Belongs to the ETS family.

It is found in the nucleus. Probable transcription factor. The polypeptide is Protein C-ets-2 (ETS2) (Gallus gallus (Chicken)).